Here is a 175-residue protein sequence, read N- to C-terminus: Ribosome maturation factor RimM (175 aa).

Positions 99–171 (AGEYYWFQLK…RILFDLPDGL (73 aa)) constitute a PRC barrel domain.

The protein belongs to the RimM family. As to quaternary structure, binds ribosomal protein uS19.

Its subcellular location is the cytoplasm. An accessory protein needed during the final step in the assembly of 30S ribosomal subunit, possibly for assembly of the head region. Essential for efficient processing of 16S rRNA. May be needed both before and after RbfA during the maturation of 16S rRNA. It has affinity for free ribosomal 30S subunits but not for 70S ribosomes. The protein is Ribosome maturation factor RimM of Syntrophotalea carbinolica (strain DSM 2380 / NBRC 103641 / GraBd1) (Pelobacter carbinolicus).